The sequence spans 359 residues: Queuine tRNA-ribosyltransferase (359 aa).

Residue Asp92 is the Proton acceptor of the active site. Substrate-binding positions include 92-96 (DSGGF), Asp146, Gln189, and Gly216. The segment at 245–251 (GVGKPAD) is RNA binding. The Nucleophile role is filled by Asp264. The interval 269-273 (TRSGR) is RNA binding; important for wobble base 34 recognition. Residues Cys302, Cys304, Cys307, and His333 each contribute to the Zn(2+) site.

The protein belongs to the queuine tRNA-ribosyltransferase family. In terms of assembly, homodimer. Within each dimer, one monomer is responsible for RNA recognition and catalysis, while the other monomer binds to the replacement base PreQ1. Zn(2+) is required as a cofactor.

It carries out the reaction 7-aminomethyl-7-carbaguanine + guanosine(34) in tRNA = 7-aminomethyl-7-carbaguanosine(34) in tRNA + guanine. Its pathway is tRNA modification; tRNA-queuosine biosynthesis. Functionally, catalyzes the base-exchange of a guanine (G) residue with the queuine precursor 7-aminomethyl-7-deazaguanine (PreQ1) at position 34 (anticodon wobble position) in tRNAs with GU(N) anticodons (tRNA-Asp, -Asn, -His and -Tyr). Catalysis occurs through a double-displacement mechanism. The nucleophile active site attacks the C1' of nucleotide 34 to detach the guanine base from the RNA, forming a covalent enzyme-RNA intermediate. The proton acceptor active site deprotonates the incoming PreQ1, allowing a nucleophilic attack on the C1' of the ribose to form the product. After dissociation, two additional enzymatic reactions on the tRNA convert PreQ1 to queuine (Q), resulting in the hypermodified nucleoside queuosine (7-(((4,5-cis-dihydroxy-2-cyclopenten-1-yl)amino)methyl)-7-deazaguanosine). In Rickettsia bellii (strain RML369-C), this protein is Queuine tRNA-ribosyltransferase.